The following is a 142-amino-acid chain: Large ribosomal subunit protein uL11 (142 aa).

Belongs to the universal ribosomal protein uL11 family. As to quaternary structure, part of the ribosomal stalk of the 50S ribosomal subunit. Interacts with L10 and the large rRNA to form the base of the stalk. L10 forms an elongated spine to which L12 dimers bind in a sequential fashion forming a multimeric L10(L12)X complex. Post-translationally, one or more lysine residues are methylated.

Functionally, forms part of the ribosomal stalk which helps the ribosome interact with GTP-bound translation factors. This is Large ribosomal subunit protein uL11 from Pelotomaculum thermopropionicum (strain DSM 13744 / JCM 10971 / SI).